A 298-amino-acid polypeptide reads, in one-letter code: Possible hemolysin C (298 aa).

CBS domains follow at residues 80–141 and 145–202; these read MVPR…QNGC and LIRK…IDDE.

It belongs to the UPF0053 family. Hemolysin C subfamily.

This is Possible hemolysin C (tlyC) from Rickettsia canadensis (strain McKiel).